A 615-amino-acid chain; its full sequence is 1-deoxy-D-xylulose-5-phosphate synthase (615 aa).

Residues His-76 and 117 to 119 (GHS) each bind thiamine diphosphate. Asp-148 is a Mg(2+) binding site. Thiamine diphosphate-binding positions include 149 to 150 (GA), Asn-177, Tyr-284, and Glu-365. Residue Asn-177 coordinates Mg(2+).

This sequence belongs to the transketolase family. DXPS subfamily. As to quaternary structure, homodimer. Mg(2+) is required as a cofactor. Requires thiamine diphosphate as cofactor.

It carries out the reaction D-glyceraldehyde 3-phosphate + pyruvate + H(+) = 1-deoxy-D-xylulose 5-phosphate + CO2. It participates in metabolic intermediate biosynthesis; 1-deoxy-D-xylulose 5-phosphate biosynthesis; 1-deoxy-D-xylulose 5-phosphate from D-glyceraldehyde 3-phosphate and pyruvate: step 1/1. Catalyzes the acyloin condensation reaction between C atoms 2 and 3 of pyruvate and glyceraldehyde 3-phosphate to yield 1-deoxy-D-xylulose-5-phosphate (DXP). In Francisella tularensis subsp. tularensis (strain FSC 198), this protein is 1-deoxy-D-xylulose-5-phosphate synthase.